Reading from the N-terminus, the 88-residue chain is Small ribosomal subunit protein bS20 (88 aa).

The interval 1–36 is disordered; that stretch reads MANTSSAKKATRKIARRTAVNKSRRTQMRGSVRTVE.

Belongs to the bacterial ribosomal protein bS20 family.

In terms of biological role, binds directly to 16S ribosomal RNA. This Rhodopseudomonas palustris (strain HaA2) protein is Small ribosomal subunit protein bS20.